We begin with the raw amino-acid sequence, 470 residues long: TNF receptor-associated factor 4 (470 aa).

The RING-type zinc finger occupies 18–58 (CPLCGKPMREPVQVSTCGHRFCDTCLQEFLSEGVFKCPEDQ). TRAF-type zinc fingers lie at residues 102 to 154 (HLNT…EAYE), 155 to 208 (SHEG…DTIQ), and 209 to 266 (SHQY…KLAM). Lys263 is covalently cross-linked (Glycyl lysine isopeptide (Lys-Gly) (interchain with G-Cter in ubiquitin)). Positions 277–309 (HLAMMCALVSRQRQELQELRRELEELSVGSDGV) form a coiled coil. Residues 307-462 (DGVLIWKIGS…DDAVFIRAAV (156 aa)) enclose the MATH domain. Ser426 carries the post-translational modification Phosphoserine.

It belongs to the TNF receptor-associated factor family. B subfamily. As to quaternary structure, homotrimer. Interacts with LTBR/TNFRSF3, NGFR/TNFRSF16, RPS6KB1 and TGFB1I1. Interacts with SMURF1. Interacts (via TRAF domain) with MAP3K4 (via kinase domain). Interacts with NCF1, TICAM1, IRAK1 and TRAF6, and is probably part of a complex containing TRAF4, NCF1, TICAM1, IRAK1 and TRAF6. Interacts (via MATH domain) with GP6 and GP1BB. Interacts with EGFR (via C-terminal region); this interaction promotes the formation of EGFR asymmetric dimers. Interacts with PKM; this interaction promotes PKM kinase activity. In terms of processing, polyubiquitinated, leading to its proteasomal degradation. Ubiquitinated at Lys-263 by the SCF(FBXL2) complex, leading to its degradation by the proteasome. As to expression, expressed in epithelial cells of thymus, dendritic cells of lymph node, and in the basal cell layer of epithelia such as epidermis, nasopharynx, respiratory tract, salivary gland, and esophagus.

The protein resides in the cytoplasm. It localises to the nucleus. It is found in the perinuclear region. Its subcellular location is the cell junction. The protein localises to the tight junction. The protein resides in the cell membrane. It localises to the cytoskeleton. The enzyme catalyses S-ubiquitinyl-[E2 ubiquitin-conjugating enzyme]-L-cysteine + [acceptor protein]-L-lysine = [E2 ubiquitin-conjugating enzyme]-L-cysteine + N(6)-ubiquitinyl-[acceptor protein]-L-lysine.. The protein operates within protein degradation; proteasomal ubiquitin-dependent pathway. Its function is as follows. Adapter protein with E3 ligase activity that is involved in many diverse biological processes including cell proliferation, migration, differentiation, DNA repair, platelet activation or apoptosis. Promotes EGFR-mediated signaling by facilitating the dimerization of EGFR and downstream AKT activation thereby promoting cell proliferation. Ubiquitinates SMURF2 through 'Lys-48'-linked ubiquitin chain leading to SMURF2 degradation through the proteasome and subsequently osteogenic differentiation. Promotes 'Lys-63'-mediated ubiquitination of CHK1 which in turn activates cell cycle arrest and activation of DNA repair. In addition, promotes an atypical 'Lys-29'-linked ubiquitination at the C-terminal end of IRS1 which is crucial for insulin-like growth factor (IGF) signal transduction. Regulates activation of NF-kappa-B in response to signaling through Toll-like receptors. Required for normal skeleton development, and for normal development of the respiratory tract. Required for activation of RPS6KB1 in response to TNF signaling. Modulates TRAF6 functions. Inhibits adipogenic differentiation by activating pyruvate kinase PKM activity and subsequently the beta-catenin signaling pathway. This chain is TNF receptor-associated factor 4 (TRAF4), found in Homo sapiens (Human).